We begin with the raw amino-acid sequence, 272 residues long: 3-methyl-2-oxobutanoate hydroxymethyltransferase (272 aa).

The Mg(2+) site is built by aspartate 53 and aspartate 92. Residues 53–54 (DS), aspartate 92, and lysine 120 each bind 3-methyl-2-oxobutanoate. Glutamate 122 serves as a coordination point for Mg(2+). Glutamate 189 serves as the catalytic Proton acceptor.

Belongs to the PanB family. In terms of assembly, homodecamer; pentamer of dimers. Mg(2+) is required as a cofactor.

Its subcellular location is the cytoplasm. The enzyme catalyses 3-methyl-2-oxobutanoate + (6R)-5,10-methylene-5,6,7,8-tetrahydrofolate + H2O = 2-dehydropantoate + (6S)-5,6,7,8-tetrahydrofolate. It participates in cofactor biosynthesis; (R)-pantothenate biosynthesis; (R)-pantoate from 3-methyl-2-oxobutanoate: step 1/2. In terms of biological role, catalyzes the reversible reaction in which hydroxymethyl group from 5,10-methylenetetrahydrofolate is transferred onto alpha-ketoisovalerate to form ketopantoate. The polypeptide is 3-methyl-2-oxobutanoate hydroxymethyltransferase (Ralstonia pickettii (strain 12J)).